The primary structure comprises 350 residues: Trans-enoyl reductase iliB (350 aa).

NADP(+) is bound at residue V50–K53. A145–L152 lines the substrate pocket. NADP(+) contacts are provided by residues S177–S180, Y195, and L242–D243. T262–F266 is a binding site for substrate. Residue I331–K332 coordinates NADP(+).

This sequence belongs to the zinc-containing alcohol dehydrogenase family. Monomer.

The enzyme catalyses N-[(4E,6E,10S,12Z,14E)-6,10-dimethyl-3-oxohexadeca-4,6,12,14-tetraenoyl]-L-tyrosyl-[ACP] = (3E,5S)-3-[(2E,4E,8S,10E,12Z)-1-hydroxy-4,8-dimethyltetradeca-2,4,10,12-tetraen-1-ylidene]-5-[(4-hydroxyphenyl)methyl]pyrrolidine-2,4-dione + holo-[ACP] + H(+). It functions in the pathway mycotoxin biosynthesis. In terms of biological role, trans-enoyl reductase; part of the gene cluster that mediates the biosynthesis of ilicicolin H, a 4-hydroxy-2-pyridonealkaloid that has potent and broad antifungal activities by inhibiting the mitochondrial respiration chain. IliB collaborates with the hybrid PKS-NRPS synthetase iliA to assemble the backbone of ilicicolin H. The PKS portion of iliA and trans-acting enoyl reductase iliB work together to construct an octaketide, and two methyl groups are introduced by the MT domain of iliA during the chain assembly. The nascent chain is then condensed with tyrosine, catalyzed by the iliA C domain, and the resulting PKS-NRPS hybrid is offloaded by the iliA RED domain to form an advanced tetramic acid intermediate. The biosynthesis of ilicicolin H starts with formation of the tetramic acid by the hybrid PKS-NRPS synthetase iliA with the partnering trans-enoyl reductase iliB since iliA lacks a designated enoylreductase (ER) domain. The cytochrome P450 monooxygenase iliC then catalyzes the ring expansion of the tetramate to the acyclic 2-pyridone. The pericyclase iliD further converts the acyclic 2-pyridone into 8-epi-ilicicolin H. 8-epi-ilicicolin H might then spontaneously convert to ilicicolin H since ilicicolin H is produced in the absence of the epimerase iliE, in contrast to what was observed for the Talaromyces variabilis ilicolin H biosynthetic pathway. The polypeptide is Trans-enoyl reductase iliB (Hypocrea jecorina (strain QM6a) (Trichoderma reesei)).